We begin with the raw amino-acid sequence, 31 residues long: Relaxin B chain (31 aa).

Pyrrolidone carboxylic acid is present on Gln1.

The protein belongs to the insulin family. As to quaternary structure, heterodimer of a B chain and an A chain linked by two disulfide bonds.

The protein resides in the secreted. In terms of biological role, relaxin is an ovarian hormone that acts with estrogen to produce dilatation of the birth canal in many mammals. This chain is Relaxin B chain, found in Phocoenoides dalli dalli (Dall's porpoise).